Here is a 258-residue protein sequence, read N- to C-terminus: Triosephosphate isomerase (258 aa).

9–11 provides a ligand contact to substrate; that stretch reads NWK. The active-site Electrophile is the His95. Residue Glu167 is the Proton acceptor of the active site. Substrate-binding residues include Gly173 and Ser212.

This sequence belongs to the triosephosphate isomerase family. As to quaternary structure, homodimer.

The protein resides in the cytoplasm. The enzyme catalyses D-glyceraldehyde 3-phosphate = dihydroxyacetone phosphate. Its pathway is carbohydrate biosynthesis; gluconeogenesis. It functions in the pathway carbohydrate degradation; glycolysis; D-glyceraldehyde 3-phosphate from glycerone phosphate: step 1/1. Its function is as follows. Involved in the gluconeogenesis. Catalyzes stereospecifically the conversion of dihydroxyacetone phosphate (DHAP) to D-glyceraldehyde-3-phosphate (G3P). The polypeptide is Triosephosphate isomerase (Blochmanniella pennsylvanica (strain BPEN)).